A 548-amino-acid chain; its full sequence is Protein swallow (548 aa).

Disordered stretches follow at residues 67-109 (AKTC…GRSS), 184-206 (NCQT…SSSF), and 358-428 (FSSV…ELIS). The span at 79–91 (QEDEDDYDEDVDG) shows a compositional bias: acidic residues. Positions 189 to 205 (SNSDSNYNSNSNNSSSS) are enriched in low complexity. A phosphoserine mark is found at serine 362 and serine 368. A compositionally biased stretch (polar residues) spans 388–402 (APNNSETSQPSSNDS). Residues 406 to 420 (VEAHEEERPSSRRQW) show a composition bias toward basic and acidic residues. 6 positions are modified to phosphoserine: serine 463, serine 471, serine 475, serine 483, serine 485, and serine 487.

May be a homo- or heterodimer.

It is found in the nucleus. In terms of biological role, has a role in localizing bicoid mRNA at the anterior margin of the oocyte during oogenesis, and a poorly characterized role in nuclear divisions in early embryogenesis. The protein is Protein swallow (swa) of Drosophila melanogaster (Fruit fly).